We begin with the raw amino-acid sequence, 834 residues long: Mannosyl-oligosaccharide glucosidase (834 aa).

Positions 1–10 (MARGERRRRA) are enriched in basic residues. The disordered stretch occupies residues 1-37 (MARGERRRRAAAAEGARPLERARAAGRRDGRAGGARG). Residues 1–43 (MARGERRRRAAAAEGARPLERARAAGRRDGRAGGARGSASGAA) lie on the Cytoplasmic side of the membrane. Positions 3–9 (RGERRRR) match the Endoplasmic reticulum targeting motif. A compositionally biased stretch (basic and acidic residues) spans 17–31 (RPLERARAAGRRDGR). A helical; Signal-anchor for type II membrane protein membrane pass occupies residues 44 to 64 (LAVVVLALAFGLSGRWVLAWL). Residues 65-834 (RVRRALTLHP…LVLLIMAEEY (770 aa)) are Lumenal-facing. Residues 74 to 136 (PAPSALPPDS…GTPPKLRHTC (63 aa)) are required for endoplasmic reticulum targeting. Aspartate 580 (proton donor) is an active-site residue. A glycan (N-linked (GlcNAc...) asparagine) is linked at asparagine 654. Glutamate 804 serves as the catalytic Proton acceptor.

Belongs to the glycosyl hydrolase 63 family.

It is found in the endoplasmic reticulum membrane. It catalyses the reaction N(4)-(alpha-D-Glc-(1-&gt;2)-alpha-D-Glc-(1-&gt;3)-alpha-D-Glc-(1-&gt;3)-alpha-D-Man-(1-&gt;2)-alpha-D-Man-(1-&gt;2)-alpha-D-Man-(1-&gt;3)-[alpha-D-Man-(1-&gt;2)-alpha-D-Man-(1-&gt;3)-[alpha-D-Man-(1-&gt;2)-alpha-D-Man-(1-&gt;6)]-alpha-D-Man-(1-&gt;6)]-beta-D-Man-(1-&gt;4)-beta-D-GlcNAc-(1-&gt;4)-beta-D-GlcNAc)-L-asparaginyl-[protein] + H2O = N(4)-(alpha-D-Glc-(1-&gt;3)-alpha-D-Glc-(1-&gt;3)-alpha-D-Man-(1-&gt;2)-alpha-D-Man-(1-&gt;2)-alpha-D-Man-(1-&gt;3)-[alpha-D-Man-(1-&gt;2)-alpha-D-Man-(1-&gt;3)-[alpha-D-Man-(1-&gt;2)-alpha-D-Man-(1-&gt;6)]-alpha-D-Man-(1-&gt;6)]-beta-D-Man-(1-&gt;4)-beta-D-GlcNAc-(1-&gt;4)-beta-D-GlcNAc)-L-asparaginyl-[protein] + beta-D-glucose. The protein operates within glycan metabolism; N-glycan degradation. Its activity is regulated as follows. Inhibited by the deoxynojirimycin derivative N-9'-Methoxynonyl-1-Deoxynojirimycin. Its function is as follows. In the context of N-glycan degradation, cleaves the distal alpha 1,2-linked glucose residue from the Glc(3)Man(9)GlcNAc(2) oligosaccharide precursor in a highly specific manner. Functionally, (Microbial infection) Required for successful influenza or dengue virus infection; inhibition of its activity by a deoxynojirimycin derivative prevents death in mice infected with lethal doses of influenza or dengue viruses, even when administrated after infection. The chain is Mannosyl-oligosaccharide glucosidase from Mus musculus (Mouse).